Consider the following 64-residue polypeptide: Ferredoxin-like protein in nif region (64 aa).

In terms of domain architecture, 4Fe-4S ferredoxin-type spans 2-30 (AFKIIASQCTQCGACEFECPSNAIELKGE). Residues cysteine 10, cysteine 13, cysteine 16, cysteine 20, cysteine 39, cysteine 42, cysteine 51, and cysteine 55 each contribute to the [4Fe-4S] cluster site.

[4Fe-4S] cluster is required as a cofactor.

In Sinorhizobium fredii (strain NBRC 101917 / NGR234), this protein is Ferredoxin-like protein in nif region (fdxN).